A 240-amino-acid polypeptide reads, in one-letter code: Superoxide dismutase [Cu-Zn] (240 aa).

The first 32 residues, 1 to 32 (MPKPADHRNHAAVSTSVLSALFLGAGAALLSA), serve as a signal peptide directing secretion. Residue C33 is the site of N-palmitoyl cysteine attachment. C33 is lipidated: S-diacylglycerol cysteine. Composition is skewed to polar residues over residues 36–51 (PQHA…SIWT) and 68–77 (GAQSLTSTLT). Residues 36 to 77 (PQHASTVPGTTPSIWTGSPAPSGLSGHDEESPGAQSLTSTLT) form a disordered region. 2 residues coordinate Cu cation: H116 and H118. C123 and C234 are disulfide-bonded. H146 and D158 together coordinate Zn(2+). H195 is a Cu cation binding site.

The protein belongs to the Cu-Zn superoxide dismutase family. It depends on Cu cation as a cofactor. Zn(2+) is required as a cofactor.

It is found in the cell membrane. It catalyses the reaction 2 superoxide + 2 H(+) = H2O2 + O2. Its activity is regulated as follows. Inhibited by the copper chelator diethyl dithiocarbamate. Destroys radicals which are normally produced within the cells and which are toxic to biological systems. May play a role in favoring mycobacterial survival in phagocytes. The polypeptide is Superoxide dismutase [Cu-Zn] (sodC) (Mycobacterium bovis (strain ATCC BAA-935 / AF2122/97)).